The following is a 422-amino-acid chain: 5'-deoxyadenosine deaminase (422 aa).

Zn(2+) contacts are provided by H57 and H59. Residues E86 and H178 each contribute to the substrate site. H205 is a Zn(2+) binding site. Positions 208 and 294 each coordinate substrate. D294 is a binding site for Zn(2+).

The protein belongs to the metallo-dependent hydrolases superfamily. MTA/SAH deaminase family. In terms of assembly, homotetramer. The cofactor is Zn(2+).

It carries out the reaction 5'-deoxyadenosine + H2O + H(+) = 5'-deoxyinosine + NH4(+). The enzyme catalyses S-adenosyl-L-homocysteine + H2O + H(+) = S-inosyl-L-homocysteine + NH4(+). It catalyses the reaction S-methyl-5'-thioadenosine + H2O + H(+) = S-methyl-5'-thioinosine + NH4(+). The catalysed reaction is adenosine + H2O + H(+) = inosine + NH4(+). Its pathway is amino-acid biosynthesis; S-adenosyl-L-methionine biosynthesis. Catalyzes the deamination of three SAM-derived enzymatic products, namely 5'-deoxyadenosine, S-adenosyl-L-homocysteine, and 5'-methylthioadenosine, to produce the inosine analogs. Can also deaminate adenosine. The preferred substrate for this enzyme is 5'-deoxyadenosine, but all these substrates are efficiently deaminated. Likely functions in a S-adenosyl-L-methionine (SAM) recycling pathway from S-adenosyl-L-homocysteine (SAH) produced from SAM-dependent methylation reactions. May also be involved in the recycling of 5'-deoxyadenosine, whereupon the 5'-deoxyribose moiety of 5'-deoxyinosine is further metabolized to deoxyhexoses used for the biosynthesis of aromatic amino acids in methanogens. The sequence is that of 5'-deoxyadenosine deaminase from Methanococcus maripaludis (strain C6 / ATCC BAA-1332).